Reading from the N-terminus, the 362-residue chain is Chemerin-like receptor 1 (362 aa).

At 1 to 37 the chain is on the extracellular side; it reads MEAEDYNASYEDYPDDVDPIVVLEELSPLEGRVVRIL. N-linked (GlcNAc...) asparagine glycosylation is present at Asn-7. The chain crosses the membrane as a helical span at residues 38-58; that stretch reads LVAVYSVICLLGILGNGLVIV. At 59–70 the chain is on the cytoplasmic side; sequence MITCKMKRTVNT. The helical transmembrane segment at 71 to 91 threads the bilayer; sequence VWFLNLAVADFLFNVFLPVHI. Topologically, residues 92–108 are extracellular; the sequence is AYAALDYHWVFGTAMCK. A disulfide bond links Cys-107 and Cys-184. The chain crosses the membrane as a helical span at residues 109-129; it reads ISNFLLIHNMFTSVFLLTVIS. Over 130–151 the chain is Cytoplasmic; sequence FDRCVSVLLPVWSQNHRSVRLA. The chain crosses the membrane as a helical span at residues 152–172; that stretch reads YTACLVIWVLAFFLSSPSLVF. Residues 173 to 219 lie on the Extracellular side of the membrane; it reads RDTARLHGKISCFNNFSLSAAVSSPWPAHPQVDPVGSGRHKVVTITR. A glycan (N-linked (GlcNAc...) asparagine) is linked at Asn-187. The helical transmembrane segment at 220 to 240 threads the bilayer; the sequence is FLCGFLVPGLITTACYLTIVY. Topologically, residues 241 to 255 are cytoplasmic; sequence KLQRSRLAKTKKPFK. A helical transmembrane segment spans residues 256-276; it reads IILTIIVTFFLCWCPYHAFYL. Residues 277–281 are Extracellular-facing; the sequence is LELRR. A helical transmembrane segment spans residues 282–302; the sequence is GSVPPSVFSLGVPLATAIAIA. At 303 to 362 the chain is on the cytoplasmic side; sequence NSCMNPILYVFMGQDFKKFRVALFSRLVNALSEDTGHSSYPSHRSFTKMSSMNERETGML. Ser-334 carries the phosphoserine modification. The interval 336 to 362 is disordered; sequence DTGHSSYPSHRSFTKMSSMNERETGML. Thr-337 is modified (phosphothreonine). Residues 339-354 show a composition bias toward polar residues; sequence HSSYPSHRSFTKMSSM. Phosphoserine is present on residues Ser-344, Ser-347, and Ser-353.

Belongs to the chemokine-like receptor (CMKLR) family. Widely expressed in several tissues including adipose, muscle, liver and brain.

The protein resides in the cell membrane. Functionally, receptor for the chemoattractant adipokine chemerin/RARRES2 and for the omega-3 fatty acid derived molecule resolvin E1. Interaction with RARRES2 initiates activation of G proteins G(i)/G(o) and beta-arrestin pathways inducing cellular responses via second messenger pathways such as intracellular calcium mobilization, phosphorylation of MAP kinases MAPK1/MAPK3 (ERK1/2), TYRO3, MAPK14/P38MAPK and PI3K leading to multifunctional effects, like, reduction of immune responses, enhancing of adipogenesis and angionesis. Resolvin E1 down-regulates cytokine production in macrophages by reducing the activation of MAPK1/3 (ERK1/2) and NF-kappa-B. Positively regulates adipogenesis and adipocyte metabolism. The sequence is that of Chemerin-like receptor 1 (CMLKR1) from Bos taurus (Bovine).